Consider the following 323-residue polypeptide: Acetyl-coenzyme A carboxylase carboxyl transferase subunit alpha (323 aa).

The region spanning 39–293 (RLAGKSQQLT…KRSLAESLRQ (255 aa)) is the CoA carboxyltransferase C-terminal domain.

It belongs to the AccA family. As to quaternary structure, acetyl-CoA carboxylase is a heterohexamer composed of biotin carboxyl carrier protein (AccB), biotin carboxylase (AccC) and two subunits each of ACCase subunit alpha (AccA) and ACCase subunit beta (AccD).

The protein localises to the cytoplasm. The enzyme catalyses N(6)-carboxybiotinyl-L-lysyl-[protein] + acetyl-CoA = N(6)-biotinyl-L-lysyl-[protein] + malonyl-CoA. Its pathway is lipid metabolism; malonyl-CoA biosynthesis; malonyl-CoA from acetyl-CoA: step 1/1. In terms of biological role, component of the acetyl coenzyme A carboxylase (ACC) complex. First, biotin carboxylase catalyzes the carboxylation of biotin on its carrier protein (BCCP) and then the CO(2) group is transferred by the carboxyltransferase to acetyl-CoA to form malonyl-CoA. In Cupriavidus pinatubonensis (strain JMP 134 / LMG 1197) (Cupriavidus necator (strain JMP 134)), this protein is Acetyl-coenzyme A carboxylase carboxyl transferase subunit alpha.